A 268-amino-acid polypeptide reads, in one-letter code: 4-hydroxy-tetrahydrodipicolinate reductase (268 aa).

NAD(+) contacts are provided by residues 10–15 (GAGGRM), Asp36, 99–101 (GTT), and 123–126 (APNM). His156 acts as the Proton donor/acceptor in catalysis. A (S)-2,3,4,5-tetrahydrodipicolinate-binding site is contributed by His157. Lys160 (proton donor) is an active-site residue. Residue 166–167 (GT) participates in (S)-2,3,4,5-tetrahydrodipicolinate binding.

This sequence belongs to the DapB family.

It localises to the cytoplasm. The catalysed reaction is (S)-2,3,4,5-tetrahydrodipicolinate + NAD(+) + H2O = (2S,4S)-4-hydroxy-2,3,4,5-tetrahydrodipicolinate + NADH + H(+). The enzyme catalyses (S)-2,3,4,5-tetrahydrodipicolinate + NADP(+) + H2O = (2S,4S)-4-hydroxy-2,3,4,5-tetrahydrodipicolinate + NADPH + H(+). Its pathway is amino-acid biosynthesis; L-lysine biosynthesis via DAP pathway; (S)-tetrahydrodipicolinate from L-aspartate: step 4/4. Catalyzes the conversion of 4-hydroxy-tetrahydrodipicolinate (HTPA) to tetrahydrodipicolinate. The sequence is that of 4-hydroxy-tetrahydrodipicolinate reductase from Dechloromonas aromatica (strain RCB).